The following is a 368-amino-acid chain: 3-isopropylmalate dehydrogenase (368 aa).

NAD(+) is bound at residue 80–93; the sequence is GPKWDNLEFSKKPE. Residues Arg100, Arg110, Arg138, and Asp229 each contribute to the substrate site. 3 residues coordinate Mg(2+): Asp229, Asp253, and Asp257. 292 to 304 contacts NAD(+); sequence GSAPDIAGKEIAN.

This sequence belongs to the isocitrate and isopropylmalate dehydrogenases family. LeuB type 1 subfamily. Homodimer. Mg(2+) serves as cofactor. Requires Mn(2+) as cofactor.

Its subcellular location is the cytoplasm. It carries out the reaction (2R,3S)-3-isopropylmalate + NAD(+) = 4-methyl-2-oxopentanoate + CO2 + NADH. The protein operates within amino-acid biosynthesis; L-leucine biosynthesis; L-leucine from 3-methyl-2-oxobutanoate: step 3/4. In terms of biological role, catalyzes the oxidation of 3-carboxy-2-hydroxy-4-methylpentanoate (3-isopropylmalate) to 3-carboxy-4-methyl-2-oxopentanoate. The product decarboxylates to 4-methyl-2 oxopentanoate. This is 3-isopropylmalate dehydrogenase from Pelagibacter ubique (strain HTCC1062).